Consider the following 124-residue polypeptide: Small ribosomal subunit protein uS12 (124 aa).

Residue Asp89 is modified to 3-methylthioaspartic acid.

It belongs to the universal ribosomal protein uS12 family. Part of the 30S ribosomal subunit. Contacts proteins S8 and S17. May interact with IF1 in the 30S initiation complex.

Functionally, with S4 and S5 plays an important role in translational accuracy. Its function is as follows. Interacts with and stabilizes bases of the 16S rRNA that are involved in tRNA selection in the A site and with the mRNA backbone. Located at the interface of the 30S and 50S subunits, it traverses the body of the 30S subunit contacting proteins on the other side and probably holding the rRNA structure together. The combined cluster of proteins S8, S12 and S17 appears to hold together the shoulder and platform of the 30S subunit. This Shewanella frigidimarina (strain NCIMB 400) protein is Small ribosomal subunit protein uS12.